The primary structure comprises 239 residues: Ribonuclease PH (239 aa).

Phosphate-binding positions include Arg87 and 125 to 127; that span reads GTR.

This sequence belongs to the RNase PH family. Homohexameric ring arranged as a trimer of dimers.

It carries out the reaction tRNA(n+1) + phosphate = tRNA(n) + a ribonucleoside 5'-diphosphate. In terms of biological role, phosphorolytic 3'-5' exoribonuclease that plays an important role in tRNA 3'-end maturation. Removes nucleotide residues following the 3'-CCA terminus of tRNAs; can also add nucleotides to the ends of RNA molecules by using nucleoside diphosphates as substrates, but this may not be physiologically important. Probably plays a role in initiation of 16S rRNA degradation (leading to ribosome degradation) during starvation. This is Ribonuclease PH from Pseudomonas aeruginosa (strain LESB58).